The following is an 842-amino-acid chain: Xyloglucanase Xgh74A (842 aa).

The signal sequence occupies residues 1–32; that stretch reads MVKKFTSKIKAAVFAAVVAATAIFGPAISSQA. The Nucleophile role is filled by Asp-70. BNR repeat units follow at residues 134 to 144, 185 to 196, 252 to 262, and 358 to 368; these read RSTDRGETWEK, WRSTDYGVTWSK, YRSTDGGVTWK, and FRSTDGGATWK. Asp-480 functions as the Proton donor in the catalytic mechanism. 5 BNR repeats span residues 533–541, 577–586, 616–626, 660–671, and 708–718; these read FSYDGGRNW, VTTDNGNSWK, YISTDGGLTFT, WRSTDGGYTFEK, and FRSDDAGKTWV. The Dockerin domain maps to 771-841; it reads DKGLVGDLNG…LLQAIPELPK (71 aa).

Belongs to the glycosyl hydrolase 74 family.

Hydrolyzes the glucosidic bonds of unbranched Glc residues in tamarind seed xyloglucan, producing XXXG, XLXG, XXLG and XLLG. Has low activity on carboxymethylcellulose, lichenan,hydroxyethylcellulose and glucuronoxylan, and no activity on xylan, polygalaturonic acid, wheat arabinoxylan, rhamnogalacturan, curdlan, laminarin, galactomannan, galactan, arabinan and pachyman or amorphous cellulose. The chain is Xyloglucanase Xgh74A from Acetivibrio thermocellus (Hungateiclostridium thermocellum).